A 463-amino-acid chain; its full sequence is Proton-coupled folate transporter (463 aa).

Residues 1–27 are Cytoplasmic-facing; it reads MVSPDDSPEIRDRPRPRRCLLPASVTV. The chain crosses the membrane as a helical span at residues 28-46; the sequence is EPVIFLSMFALALQGPLAT. The Extracellular portion of the chain corresponds to 47–86; the sequence is QYLWDRLSADIGFNGTRTVGCAMNGSKSAGPEQQEVETLT. Residues N60 and N70 are each glycosylated (N-linked (GlcNAc...) asparagine). Cysteines 67 and 302 form a disulfide. The helical transmembrane segment at 87 to 112 threads the bilayer; sequence AHWSLYINLGGFLVGLFSVMLLGPWS. Over 113–116 the chain is Cytoplasmic; it reads DKVG. A helical transmembrane segment spans residues 117 to 139; it reads RRPVLMLPCIGLALQAAVYLLVM. At 140-144 the chain is on the extracellular side; sequence YQELH. The helical transmembrane segment at 145 to 158 threads the bilayer; that stretch reads VGYFLIGRFISGIS. The Cytoplasmic portion of the chain corresponds to 159-181; it reads GDFNMILAGCFAYIADVSDRQSR. Residues D160 and E189 each coordinate H(+). The helical transmembrane segment at 182 to 207 threads the bilayer; the sequence is TFRVAVLEACLGIAGMVASIIGGHWR. At 208–212 the chain is on the extracellular side; it reads KAQGY. A helical membrane pass occupies residues 213–231; the sequence is INPFWLVFAVNLFTALYVY. Residues 232 to 270 lie on the Cytoplasmic side of the membrane; the sequence is FCVEESVKDKKPARLFTHRHYQSFFRLFTVQGENNRRRK. A helical membrane pass occupies residues 271–293; it reads LFLYSLALLVVVTVHMGAKNLFV. Residue H285 participates in H(+) binding. At 294 to 306 the chain is on the extracellular side; it reads LYELSYPLCWDSD. Residues 307 to 329 form a helical membrane-spanning segment; that stretch reads LIGYGSAAEHLTYLSSLAGLRLF. Residues 330–335 are Cytoplasmic-facing; the sequence is QLCLAD. Residues 336–355 form a helical membrane-spanning segment; sequence SWVAEMGFISNISGLVVISL. At 356 to 359 the chain is on the extracellular side; the sequence is ASTT. The helical transmembrane segment at 360-380 threads the bilayer; sequence PIMFTGYGLRFFAMATTPVIR. The Cytoplasmic portion of the chain corresponds to 381–392; that stretch reads SKLSKMVEEGEQ. Residues 393 to 418 traverse the membrane as a helical segment; the sequence is GALFSSVACVEGLSFLLATGLFNSLY. The Extracellular portion of the chain corresponds to 419–426; it reads PATLHFMK. Residues 427-445 form a helical membrane-spanning segment; the sequence is GFPFLLGALLLLIPAGIIG. Over 446–463 the chain is Cytoplasmic; sequence LIEVCEQKPMYSQFSEIS.

Belongs to the major facilitator superfamily. SLC46A family. Monomer.

The protein resides in the cell membrane. It localises to the apical cell membrane. The protein localises to the basolateral cell membrane. Its subcellular location is the endosome membrane. It is found in the cytoplasm. The catalysed reaction is folate(in) + H(+)(in) = folate(out) + H(+)(out). It carries out the reaction (6S)-5-methyl-5,6,7,8-tetrahydrofolate(in) + H(+)(in) = (6S)-5-methyl-5,6,7,8-tetrahydrofolate(out) + H(+)(out). It catalyses the reaction methotrexate(in) + H(+)(in) = methotrexate(out) + H(+)(out). The enzyme catalyses pemetrexed(in) + H(+)(in) = pemetrexed(out) + H(+)(out). Proton-coupled folate symporter that mediates folate absorption using an H(+) gradient as a driving force. Involved in the intestinal absorption of folates at the brush-border membrane of the proximal jejunum, and the transport from blood to cerebrospinal fluid across the choroid plexus. Functions at acidic pH via alternate outward- and inward-open conformation states. Protonation of residues in the outward open state primes the protein for transport. Binding of folate promotes breaking of salt bridge network and subsequent closure of the extracellular gate, leading to the inward-open state and release of protons and folate. Also able to transport antifolate drugs, such as methotrexate and pemetrexed. Also acts as a lower-affinity, pH-independent heme carrier protein and constitutes the main importer of heme in the intestine. Imports heme in the retina and retinal pigment epithelium, in neurons of the hippocampus, in hepatocytes and in the renal epithelial cells. The protein is Proton-coupled folate transporter of Xenopus laevis (African clawed frog).